Here is a 456-residue protein sequence, read N- to C-terminus: Protein disulfide-isomerase TMX3 (456 aa).

A signal peptide spans 1–29 (MANAVGRRSWAALRLCAAVILLDLAVCKG). The 102-residue stretch at 30-131 (FVEDLNESFK…KDDIIEFAHR (102 aa)) folds into the Thioredoxin domain. The Lumenal segment spans residues 30 to 378 (FVEDLNESFK…TIVSIFKSSP (349 aa)). N35 is a glycosylation site (N-linked (GlcNAc...) asparagine). Residues C56 and C59 each act as nucleophile in the active site. A disulfide bond links C56 and C59. 2 N-linked (GlcNAc...) asparagine glycosylation sites follow: N261 and N316. Residues 379-399 (LMGCFLFGLPLGVISIMCYGI) form a helical membrane-spanning segment. The Cytoplasmic segment spans residues 400 to 456 (YTADTDGGYIEERYEVSKSEMENQEQIEESKEQESSSGGSLAPTVQEPKDVLEKKKD). The interval 416-456 (SKSEMENQEQIEESKEQESSSGGSLAPTVQEPKDVLEKKKD) is disordered. Residues 446-456 (EPKDVLEKKKD) show a composition bias toward basic and acidic residues. Positions 453–456 (KKKD) match the Di-lysine motif motif.

The protein belongs to the protein disulfide isomerase family.

It localises to the endoplasmic reticulum membrane. The enzyme catalyses Catalyzes the rearrangement of -S-S- bonds in proteins.. Probable disulfide isomerase, which participates in the folding of proteins containing disulfide bonds. May act as a dithiol oxidase. Acts as a regulator of endoplasmic reticulum-mitochondria contact sites via its ability to regulate redox signals. In Mus musculus (Mouse), this protein is Protein disulfide-isomerase TMX3 (Tmx3).